We begin with the raw amino-acid sequence, 1136 residues long: Rho GTPase-activating protein 45 (1136 aa).

Disordered regions lie at residues 1-73 (MFSR…RHAS) and 91-110 (HRSP…GAGP). A phosphoserine mark is found at Ser-23, Ser-25, Ser-73, Ser-93, and Ser-99. An F-BAR domain is found at 269-539 (EEVDVLLQRC…SSKLYDPGQQ (271 aa)). 2 coiled-coil regions span residues 376 to 412 (EHEK…YVQR) and 440 to 499 (TATK…RQSD). Residues Ser-569, Ser-578, Ser-592, and Ser-619 each carry the phosphoserine modification. Residues 583 to 662 (DVARPEAAGS…SSTEELVDPD (80 aa)) are disordered. Positions 646 to 655 (TSSSGTMSST) are enriched in low complexity. The segment at 702-747 (THRLRKLRTPAKCRECNSYVYFQGAECEECCLACHKKCLETLAIQC) adopts a Phorbol-ester/DAG-type zinc-finger fold. The Rho-GAP domain maps to 761–974 (QDFSHAARSA…TLIVHYGLVF (214 aa)). 4 positions are modified to phosphoserine: Ser-949, Ser-1027, Ser-1030, and Ser-1032. The interval 1061–1136 (EASLEVASGS…SCRERQPEFV (76 aa)) is disordered. Over residues 1095–1109 (QQLSGFNTNQSNNVL) the composition is skewed to polar residues.

As to quaternary structure, HA-1 forms a complex with MHC class I HLA-A*0201. Expressed on cells of the hematopoietic lineage. Detected in dendritic cells and epidermal Langerhans cells. Expressed in peripheral blood mononuclear cells, in all leukemia/lymphoma cell lines. Detected also in some solid tumors and tissues such as cancerous and non-cancerous tissue.

The protein localises to the cytoplasm. It localises to the cell projection. Its subcellular location is the ruffle membrane. Functionally, contains a GTPase activator for the Rho-type GTPases (RhoGAP) domain that would be able to negatively regulate the actin cytoskeleton as well as cell spreading. However, also contains N-terminally a BAR-domin which is able to play an autoinhibitory effect on this RhoGAP activity. In terms of biological role, precursor of the histocompatibility antigen HA-1. More generally, minor histocompatibility antigens (mHags) refer to immunogenic peptide which, when complexed with MHC, can generate an immune response after recognition by specific T-cells. The peptides are derived from polymorphic intracellular proteins, which are cleaved by normal pathways of antigen processing. The binding of these peptides to MHC class I or class II molecules and its expression on the cell surface can stimulate T-cell responses and thereby trigger graft rejection or graft-versus-host disease (GVHD) after hematopoietic stem cell transplantation from HLA-identical sibling donor. GVHD is a frequent complication after bone marrow transplantation (BMT), due to mismatch of minor histocompatibility antigen in HLA-matched sibling marrow transplants. Specifically, mismatching for mHag HA-1 which is recognized as immunodominant, is shown to be associated with the development of severe GVHD after HLA-identical BMT. HA-1 is presented to the cell surface by MHC class I HLA-A*0201, but also by other HLA-A alleles. This complex specifically elicits donor-cytotoxic T-lymphocyte (CTL) reactivity against hematologic malignancies after treatment by HLA-identical allogenic BMT. It induces cell recognition and lysis by CTL. This is Rho GTPase-activating protein 45 from Homo sapiens (Human).